Consider the following 120-residue polypeptide: Fluoride-specific ion channel FluC 1 (120 aa).

2 consecutive transmembrane segments (helical) span residues 3–23 and 42–62; these read ALLTAVGAAFGALLRYCLNCA and LGCLLAGALAALPLPAAVAAL. Na(+) contacts are provided by glycine 69 and threonine 72. The chain crosses the membrane as a helical span at residues 99 to 119; sequence ANLAAGVGAAVLGMAAVGWFL.

It belongs to the fluoride channel Fluc/FEX (TC 1.A.43) family.

Its subcellular location is the cell membrane. The catalysed reaction is fluoride(in) = fluoride(out). With respect to regulation, na(+) is not transported, but it plays an essential structural role and its presence is essential for fluoride channel function. Fluoride-specific ion channel. Important for reducing fluoride concentration in the cell, thus reducing its toxicity. The sequence is that of Fluoride-specific ion channel FluC 1 from Thermobifida fusca (strain YX).